Reading from the N-terminus, the 72-residue chain is Protein RALF-like 12 (72 aa).

Positions 1–17 (MKAWVIGLLVICAVVIA) are cleaved as a signal peptide. 2 disulfides stabilise this stretch: Cys-34/Cys-43 and Cys-63/Cys-69. The interval 37–60 (PNPPPGCNPPGTEQKNPTPVNEYS) is disordered.

Belongs to the plant rapid alkalinization factor (RALF) family.

It is found in the secreted. Functionally, cell signaling peptide that may regulate plant stress, growth, and development. Mediates a rapid alkalinization of extracellular space by mediating a transient increase in the cytoplasmic Ca(2+) concentration leading to a calcium-dependent signaling events through a cell surface receptor and a concomitant activation of some intracellular mitogen-activated protein kinases. This is Protein RALF-like 12 (RALFL12) from Arabidopsis thaliana (Mouse-ear cress).